We begin with the raw amino-acid sequence, 138 residues long: Protein FAM136A (138 aa).

At A2 the chain carries N-acetylalanine. Phosphothreonine is present on residues T124 and T126.

This sequence belongs to the FAM136 family.

The protein is Protein FAM136A (FAM136A) of Homo sapiens (Human).